A 174-amino-acid polypeptide reads, in one-letter code: MELFGVPIQTMYLYTLIIAGSLTLLFLFFGDVFSGLSEGIPFLNPTLVLSFFTCFSAGGYIGELVLPLSSLLIALLSCILSIMLVVLLHIFVLVPLSSAEESLAYREDDLRGRLGKVITAVPVDGFGEVVIEGIGGTISKSAVSFDNQQISYGTTVLVVDINNGVLSVTPHEPI.

3 helical membrane-spanning segments follow: residues leucine 16–leucine 36, leucine 47–proline 67, and leucine 72–valine 92.

The protein belongs to the NfeD family.

Its subcellular location is the cell membrane. The protein localises to the membrane raft. Its function is as follows. Plays a role in assembly of FloT membrane rafts, probably recruited to rafts by FloT. In Bacillus subtilis (strain 168), this protein is Membrane protein NfeD2.